We begin with the raw amino-acid sequence, 1404 residues long: Microtubule organization protein AKNA (1404 aa).

2 disordered regions span residues M1–L304 and Q317–I382. S51 bears the Phosphoserine mark. Residues W70–S91 show a composition bias toward acidic residues. Residues K185–S203 show a composition bias toward polar residues. Position 302 is a phosphoserine (S302). Residues S485 and S520 each carry the phosphoserine modification. The disordered stretch occupies residues A494–T549. The span at P534 to T549 shows a compositional bias: polar residues. S617 bears the Phosphoserine mark. Residues M645 to L659 are compositionally biased toward basic and acidic residues. The interval M645–P708 is disordered. Composition is skewed to polar residues over residues Q660 to H674 and D686 to L707. Residues S750 and S753 each carry the phosphoserine modification. The segment at L754–A787 is PEST. 2 disordered regions span residues P755–N1038 and H1085–V1185. A compositionally biased stretch (acidic residues) spans R759–Q773. Positions T803 to T813 are enriched in basic and acidic residues. Phosphoserine is present on residues S831 and S860. The interval H885 to S906 is PEST. Composition is skewed to polar residues over residues S903 to T914, H921 to T933, and S963 to S974. S971 bears the Phosphoserine mark. Residues T1015–P1029 are compositionally biased toward low complexity. Residues H1085 to S1098 are compositionally biased toward polar residues. Residues Q1088–S1096 constitute a DNA-binding region (a.T hook). Residues S1144 and S1145 each carry the phosphoserine modification. The segment covering S1155 to E1167 has biased composition (basic and acidic residues). Position 1200 is a phosphoserine (S1200). 2 disordered regions span residues S1208–G1235 and S1253–S1286. The span at T1221 to G1235 shows a compositional bias: polar residues. Phosphoserine is present on residues S1339, S1352, and S1389.

This sequence belongs to the AKNA family. In terms of assembly, interacts with DCTN1. Interacts with MAPRE1/EB1. Interacts with ODF2. Interacts with CAMSAP3. Post-translationally, phosphorylated; phosphorylation regulates dissociation from and reassembly at the centrosome. Expressed in neural stem cells isolated at the peak of subventricular zone (SVZ): localizes at the subdistal appendages of the mother centriole in specific subtypes of neural stem cells and in almost all basal progenitors.

Its subcellular location is the cytoplasm. It is found in the cytoskeleton. It localises to the microtubule organizing center. The protein localises to the centrosome. The protein resides in the centriole. Its subcellular location is the nucleus. Its function is as follows. Centrosomal protein that plays a key role in cell delamination by regulating microtubule organization. Required for the delamination and retention of neural stem cells from the subventricular zone during neurogenesis. Also regulates the epithelial-to-mesenchymal transition in other epithelial cells. Acts by increasing centrosomal microtubule nucleation and recruiting nucleation factors and minus-end stabilizers, thereby destabilizing microtubules at the adherens junctions and mediating constriction of the apical endfoot. In addition, may also act as a transcription factor that specifically activates the expression of the CD40 receptor and its ligand CD40L/CD154, two cell surface molecules on lymphocytes that are critical for antigen-dependent-B-cell development. Binds to A/T-rich promoters. It is unclear how it can both act as a microtubule organizer and as a transcription factor; additional evidences are required to reconcile these two apparently contradictory functions. This chain is Microtubule organization protein AKNA, found in Mus musculus (Mouse).